We begin with the raw amino-acid sequence, 394 residues long: Serine palmitoyltransferase (394 aa).

Pyridoxal 5'-phosphate-binding positions include 111-112, S183, H211, and T239; that span reads GF. K242 is modified (N6-(pyridoxal phosphate)lysine).

The protein belongs to the class-II pyridoxal-phosphate-dependent aminotransferase family. Pyridoxal 5'-phosphate serves as cofactor.

It catalyses the reaction L-serine + hexadecanoyl-CoA + H(+) = 3-oxosphinganine + CO2 + CoA. Its pathway is lipid metabolism; sphingolipid metabolism. Functionally, involved in de novo bacterial ceramide synthesis. Catalyzes the condensation of L-serine with palmitoyl-CoA (hexadecanoyl-CoA) to produce 3-oxosphinganine. Also capable of using alanine as substrate leading to the formation of 1-deoxysphinganine (1-deoxySa). Contributes to the levels of endogenous sphingolipids in its host. This chain is Serine palmitoyltransferase, found in Bacteroides thetaiotaomicron (strain ATCC 29148 / DSM 2079 / JCM 5827 / CCUG 10774 / NCTC 10582 / VPI-5482 / E50).